Here is a 1056-residue protein sequence, read N- to C-terminus: Carbamoyl phosphate synthase large chain (1056 aa).

A carboxyphosphate synthetic domain region spans residues Met-1 to Asp-397. The ATP site is built by Arg-127, Arg-167, Gly-173, Gly-174, Glu-206, Val-208, Glu-213, Gly-239, Ile-240, His-241, Gln-282, and Glu-294. One can recognise an ATP-grasp 1 domain in the interval Arg-131–Ile-323. Residues Gln-282, Glu-294, and Asn-296 each contribute to the Mg(2+) site. Residues Gln-282, Glu-294, and Asn-296 each coordinate Mn(2+). An oligomerization domain region spans residues Asn-398 to Leu-530. The carbamoyl phosphate synthetic domain stretch occupies residues Val-531–Thr-920. In terms of domain architecture, ATP-grasp 2 spans Ser-662–Val-853. Residues Arg-698, Ser-737, Leu-739, Glu-744, Gly-769, Val-770, His-771, Ser-772, Gln-812, and Glu-824 each contribute to the ATP site. Residues Gln-812, Glu-824, and Asn-826 each coordinate Mg(2+). The Mn(2+) site is built by Gln-812, Glu-824, and Asn-826. Residues Asn-919–Met-1056 enclose the MGS-like domain. The segment at Leu-921 to Met-1056 is allosteric domain.

Belongs to the CarB family. Composed of two chains; the small (or glutamine) chain promotes the hydrolysis of glutamine to ammonia, which is used by the large (or ammonia) chain to synthesize carbamoyl phosphate. Tetramer of heterodimers (alpha,beta)4. It depends on Mg(2+) as a cofactor. Mn(2+) is required as a cofactor.

It catalyses the reaction hydrogencarbonate + L-glutamine + 2 ATP + H2O = carbamoyl phosphate + L-glutamate + 2 ADP + phosphate + 2 H(+). The catalysed reaction is hydrogencarbonate + NH4(+) + 2 ATP = carbamoyl phosphate + 2 ADP + phosphate + 2 H(+). It participates in amino-acid biosynthesis; L-arginine biosynthesis; carbamoyl phosphate from bicarbonate: step 1/1. Its pathway is pyrimidine metabolism; UMP biosynthesis via de novo pathway; (S)-dihydroorotate from bicarbonate: step 1/3. Large subunit of the glutamine-dependent carbamoyl phosphate synthetase (CPSase). CPSase catalyzes the formation of carbamoyl phosphate from the ammonia moiety of glutamine, carbonate, and phosphate donated by ATP, constituting the first step of 2 biosynthetic pathways, one leading to arginine and/or urea and the other to pyrimidine nucleotides. The large subunit (synthetase) binds the substrates ammonia (free or transferred from glutamine from the small subunit), hydrogencarbonate and ATP and carries out an ATP-coupled ligase reaction, activating hydrogencarbonate by forming carboxy phosphate which reacts with ammonia to form carbamoyl phosphate. In Methanoculleus marisnigri (strain ATCC 35101 / DSM 1498 / JR1), this protein is Carbamoyl phosphate synthase large chain.